A 60-amino-acid polypeptide reads, in one-letter code: Large ribosomal subunit protein uL30 (60 aa).

The protein belongs to the universal ribosomal protein uL30 family. In terms of assembly, part of the 50S ribosomal subunit.

This is Large ribosomal subunit protein uL30 from Shewanella loihica (strain ATCC BAA-1088 / PV-4).